The sequence spans 209 residues: MSSQYSNVENLSPQTIRQVMRELQEMETTPPEGIKVLINESDVTDIQALIDGPAGTPYAAGVFRVKLTLNKDFPQTPPKAYFLTKIFHPNVAANGEICVNTLKKDWKPDLGIKHILLTIKCLLIVPNPESALNEEAGKMLLERYDDYSQRARMMTEIHAQPAKCGAGAHGDDKDDDGPSTKKHAGLDKKLQDKKKEKLLKEKKRMLKRL.

A UBC core domain is found at Gln-14–Gln-160. Cys-98 serves as the catalytic Glycyl thioester intermediate. Positions Ala-162–Leu-209 are disordered. Basic and acidic residues predominate over residues His-169 to Leu-199. Over residues Lys-200–Leu-209 the composition is skewed to basic residues.

The protein belongs to the ubiquitin-conjugating enzyme family.

It catalyses the reaction S-ubiquitinyl-[E1 ubiquitin-activating enzyme]-L-cysteine + [E2 ubiquitin-conjugating enzyme]-L-cysteine = [E1 ubiquitin-activating enzyme]-L-cysteine + S-ubiquitinyl-[E2 ubiquitin-conjugating enzyme]-L-cysteine.. It participates in protein modification; protein ubiquitination. In terms of biological role, catalyzes the covalent attachment of ubiquitin to other proteins. Acts as an essential factor of the anaphase promoting complex/cyclosome (APC/C), a cell cycle-regulated ubiquitin ligase that controls progression through mitosis. Acts by specifically elongating polyubiquitin chains initiated by the E2 enzyme vih/UbcH10 on APC/C substrates, enhancing the degradation of APC/C substrates by the proteasome and promoting mitotic exit. The protein is Ubiquitin-conjugating enzyme E2 S of Drosophila erecta (Fruit fly).